A 1335-amino-acid chain; its full sequence is Aldehyde oxidase 3 (1335 aa).

The 2Fe-2S ferredoxin-type domain maps to 8 to 95 (DELIFFVNGK…GAAVTTVEGI (88 aa)). [2Fe-2S] cluster-binding residues include cysteine 47, cysteine 52, cysteine 55, and cysteine 77. Glutamine 116 serves as a coordination point for Mo-molybdopterin. [2Fe-2S] cluster-binding residues include cysteine 117, cysteine 120, cysteine 152, and cysteine 154. The FAD-binding PCMH-type domain occupies 236–421 (FRGERTTWIA…ISVFVPRSSK (186 aa)). Residue 264–271 (LVIGNTYL) participates in FAD binding. Phosphoserine is present on serine 320. FAD is bound by residues serine 354, histidine 358, aspartate 367, and leucine 411. Residues alanine 802, leucine 1043, and glutamine 1199 each coordinate Mo-molybdopterin. The active-site Proton acceptor; for azaheterocycle hydroxylase activity is the glutamate 1266.

It belongs to the xanthine dehydrogenase family. Homodimer. The cofactor is [2Fe-2S] cluster. Requires FAD as cofactor. Mo-molybdopterin is required as a cofactor. As to expression, highly expressed in liver (at protein level). In liver, the expression is greater in males than females.

Its subcellular location is the cytoplasm. The catalysed reaction is an aldehyde + O2 + H2O = a carboxylate + H2O2 + H(+). With respect to regulation, inhibited by potassium cyanide, menadione, benzamidine, raloxifene and norharmane. Oxidase with broad substrate specificity, oxidizing aromatic azaheterocycles, such as N1-methylnicotinamide and phthalazine, as well as aldehydes, such as benzaldehyde, retinal and pyridoxal. Plays a key role in the metabolism of xenobiotics and drugs containing aromatic azaheterocyclic substituents. Is probably involved in the regulation of reactive oxygen species homeostasis. May be a prominent source of superoxide generation via the one-electron reduction of molecular oxygen. May also catalyze nitric oxide (NO) production via the reduction of nitrite to NO with NADH or aldehyde as electron donor. This is Aldehyde oxidase 3 (Aox3) from Mus musculus (Mouse).